We begin with the raw amino-acid sequence, 692 residues long: Serine/threonine-protein phosphatase PP-Z1 (692 aa).

Disordered stretches follow at residues 1–309 and 321–357; these read MGNS…DIEN and ENVN…PKKF. Glycine 2 carries the N-myristoyl glycine lipid modification. Low complexity-rich tracts occupy residues 32–41, 49–69, and 91–122; these read SHSVKSAKSN, SLPS…STPS, and SSSH…RRSS. Residue serine 49 is modified to Phosphoserine. Over residues 170–179 the composition is skewed to acidic residues; sequence LTDDDNDDKD. The residue at position 171 (threonine 171) is a Phosphothreonine. A compositionally biased stretch (low complexity) spans 190 to 204; sequence RSSNSRPSSIRSGSV. Residues 207–216 show a composition bias toward basic and acidic residues; the sequence is RKSDVTHEEP. Phosphoserine occurs at positions 209 and 222. Polar residues-rich tracts occupy residues 217 to 229 and 251 to 267; these read NNGS…QENY and FGSD…NSPG. Threonine 261 carries the phosphothreonine modification. The residue at position 265 (serine 265) is a Phosphoserine. Positions 280 to 289 are enriched in low complexity; it reads TSNSTSSLNH. Residues 291–303 show a composition bias toward basic and acidic residues; sequence SSRDIYPSKHISN. The span at 321–331 shows a compositional bias: polar residues; sequence ENVNDKNNNIT. Positions 419, 421, 447, and 479 each coordinate Mn(2+). Residue histidine 480 is the Proton donor of the active site. Mn(2+) is bound by residues histidine 528 and histidine 603. The segment at 672 to 692 is disordered; it reads LANQQQQMMETSITNDNESQQ. Over residues 673–692 the composition is skewed to polar residues; it reads ANQQQQMMETSITNDNESQQ. Serine 690 bears the Phosphoserine mark.

Belongs to the PPP phosphatase family. PP-Z subfamily. Interacts with SIS2 and VHS3, which regulate its activity. It depends on Mn(2+) as a cofactor.

It carries out the reaction O-phospho-L-seryl-[protein] + H2O = L-seryl-[protein] + phosphate. It catalyses the reaction O-phospho-L-threonyl-[protein] + H2O = L-threonyl-[protein] + phosphate. Inhibited by the regulatory subunits VHS3 and SIS2. Its function is as follows. Essential for the maintenance of cell size and integrity in response to osmotic stress. The sequence is that of Serine/threonine-protein phosphatase PP-Z1 (PPZ1) from Saccharomyces cerevisiae (strain ATCC 204508 / S288c) (Baker's yeast).